We begin with the raw amino-acid sequence, 207 residues long: ADP-ribose pyrophosphatase (207 aa).

Substrate is bound by residues 37 to 38 (RE) and Arg-64. In terms of domain architecture, Nudix hydrolase spans 41–172 (EHFGAVAIVA…EIVNSIAIAG (132 aa)). Position 76 (Ala-76) interacts with Mg(2+). The short motif at 77–99 (GLLDVAGEPPHLTAARELREEVG) is the Nudix box element. Residue Leu-78 coordinates substrate. Mg(2+)-binding residues include Glu-93 and Glu-97. Substrate is bound by residues 114 to 116 (APG) and Glu-120. Mg(2+) is bound at residue Glu-142. Residue Glu-142 is the Proton acceptor of the active site.

The protein belongs to the Nudix hydrolase family. In terms of assembly, homodimer. Mg(2+) serves as cofactor. It depends on Mn(2+) as a cofactor.

The catalysed reaction is ADP-D-ribose + H2O = D-ribose 5-phosphate + AMP + 2 H(+). It catalyses the reaction 8-oxo-dGDP + H2O = 8-oxo-dGMP + phosphate + H(+). It carries out the reaction 8-oxo-GDP + H2O = 8-oxo-GMP + phosphate + H(+). Functionally, catalyzes the hydrolysis of ADP-ribose (ADPR) to AMP and ribose-5-phosphate. Can also hydrolyze ADP-mannose and ADP-glucose, with lower efficiency. Has weaker activity with NAD, GDP-sugars and UDP-sugars. Also catalyzes the conversion of 8-oxo-dGDP to 8-oxo-dGMP, and 8-oxo-GDP to 8-oxo-GMP. Functions in concert with MutT1 to detoxify 8-oxo-dGTP to 8-oxo-dGMP and may play an important role in supporting cellular growth under oxidative stress. The catalytic efficiency is much higher for the hydrolysis of ADPR than 8-oxo-dGTP, suggesting a more relevant biological role in hydrolysis of ADPR. The sequence is that of ADP-ribose pyrophosphatase from Mycobacterium tuberculosis (strain ATCC 25618 / H37Rv).